A 937-amino-acid chain; its full sequence is MTSKIQGKKPTLSRRDFIKSAAAASAAASVGLSIPSVMSAEAQNAQKLWKWDKSVCRFCGTGCGIMVATQKDNTGQAKIVAIKGDPEAPVNRGLNCIKGYFCAKIMYGADRLTTPLLRVNSNGEFDKKGKFAPVSWKRAFDEMEKQFKKAYNELGPTGIAVFGSGQYTIQEGYAAVKLVKGGFRSNNIDPNARHCMASAVVGFMETFGIDEPAGCYDDIELTDTIVTWGANMAEMHPVLWSRVTDRKLSSSNVKVINLSTYTNRTSDLADIEIIFKPHTDLAIWNFLAREIINRNAVDEAFVKENCVFSTGFVNIGYGMRNNPQHPKFKPEERDIVAKEVSKIVSNDEGITLQYLGIKAGEEMKMDKAGAAGNHWGISFEDFKKGLEPYTLDFVANLAKGNPDESIESFKQKLQSLADYYIDKNRKIVSFWTMGMNQHQRGTWVNEQSYMVHMLLGKQAKPGSGAFSLTGQPSACGTAREVGTFSHRLPADMVVANPKHREITEKIWHLPSGTLNSKIGAPYLKIMRDLEDGNIKWAWVQVNNPWQNTANANHWIAAAREQDNFIVVSECYPGISAKVADLILPTAMIYEKWGAYGNAERRTQHWKQQVVAPGEAMPDIWQMAEFAKRFKLSEVWDKGYEALDIKPVLESAKAMGYTEEDTLFDVLFANKNAKNFSAQDALLKNEFNTEVLGDSRNVEDGNGEAFKGYGFFIQKYLWEEYRQFGLGHAHDLADFDTYHRVRGLRWPVVNGKETQWRFNAKYDFYAQKLGNGKAFAFYGNKGKDMPAGSLNAPSEEKVSIDNKAKIFLRPYMDPCEMPDKEYPMWLCTGRVLEHWHSGTMTMRVPELYRAVPEALCYMHPDDANAQNLEQNQVVWVESRRGKVKAKLDLRGRNRPPKGLIYVPWFDENVFINKVCLDATCPISKQTDFKKCAVKVYKA.

Residues 1-42 (MTSKIQGKKPTLSRRDFIKSAAAASAAASVGLSIPSVMSAEA) constitute a signal peptide (tat-type signal). The 62-residue stretch at 49-110 (WKWDKSVCRF…FCAKIMYGAD (62 aa)) folds into the 4Fe-4S Mo/W bis-MGD-type domain. 4 residues coordinate [4Fe-4S] cluster: Cys56, Cys59, Cys63, and Cys96. Residues Lys98, Gln166, Asn191, Cys195, 228–235 (WGANMAEM), Met433, Gln437, Asn543, 568–569 (SE), Lys591, Asp618, and 827–836 (TGRVLEHWHS) contribute to the Mo-bis(molybdopterin guanine dinucleotide) site. Position 903 (Trp903) interacts with substrate. Mo-bis(molybdopterin guanine dinucleotide) is bound by residues Asn911 and Lys928.

This sequence belongs to the prokaryotic molybdopterin-containing oxidoreductase family. NasA/NapA/NarB subfamily. Component of the periplasmic nitrate reductase NapAB complex composed of NapA and NapB. [4Fe-4S] cluster serves as cofactor. Requires Mo-bis(molybdopterin guanine dinucleotide) as cofactor. Post-translationally, predicted to be exported by the Tat system. The position of the signal peptide cleavage has not been experimentally proven.

The protein resides in the periplasm. It carries out the reaction 2 Fe(II)-[cytochrome] + nitrate + 2 H(+) = 2 Fe(III)-[cytochrome] + nitrite + H2O. Functionally, catalytic subunit of the periplasmic nitrate reductase complex NapAB. Receives electrons from NapB and catalyzes the reduction of nitrate to nitrite. This Helicobacter hepaticus (strain ATCC 51449 / 3B1) protein is Periplasmic nitrate reductase.